Consider the following 471-residue polypeptide: 7-hydroxymethyl chlorophyll a reductase, chloroplastic (471 aa).

The transit peptide at 1–44 (MARCISFLSTSSSLPCATKPPCCSVSSVLPSSPSSHQCRGRKTS) directs the protein to the chloroplast.

It belongs to the FrhB family. It depends on FAD as a cofactor. The cofactor is iron-sulfur cluster.

It is found in the plastid. The protein localises to the chloroplast. The enzyme catalyses chlorophyll a + 2 oxidized [2Fe-2S]-[ferredoxin] + H2O = 7(1)-hydroxychlorophyll a + 2 reduced [2Fe-2S]-[ferredoxin] + 2 H(+). In terms of biological role, probable iron-sulfur flavoprotein that converts 7-hydroxymethyl chlorophyll a to chlorophyll a using ferredoxin as a reducing equivalent. Catalyzes the reduction of a hydroxymethyl group to a methyl group. In Oryza sativa subsp. japonica (Rice), this protein is 7-hydroxymethyl chlorophyll a reductase, chloroplastic (HCAR).